The sequence spans 177 residues: Bifunctional protein PyrR (177 aa).

The PRPP-binding motif lies at Val-99–Thr-111.

It belongs to the purine/pyrimidine phosphoribosyltransferase family. PyrR subfamily.

It carries out the reaction UMP + diphosphate = 5-phospho-alpha-D-ribose 1-diphosphate + uracil. Its function is as follows. Regulates the transcription of the pyrimidine nucleotide (pyr) operon in response to exogenous pyrimidines. Also displays a weak uracil phosphoribosyltransferase activity which is not physiologically significant. The sequence is that of Bifunctional protein PyrR from Gloeothece citriformis (strain PCC 7424) (Cyanothece sp. (strain PCC 7424)).